The chain runs to 172 residues: RNA silencing suppressor p19 (172 aa).

Positions Met1–Asp20 are enriched in basic and acidic residues. The tract at residues Met1–Ser38 is disordered.

It belongs to the tombusviruses protein p19 family. In terms of assembly, homodimer.

Functionally, acts as a suppressor of RNA-mediated gene silencing, also known as post-transcriptional gene silencing (PTGS), a mechanism of plant viral defense that limits the accumulation of viral RNAs. Binds to short interfering RNAs (siRNAs) with high affinity. Acts as a molecular caliper to specifically select siRNAs based on the length of the duplex region of the RNA. The polypeptide is RNA silencing suppressor p19 (Capsicum annuum (Capsicum pepper)).